Reading from the N-terminus, the 280-residue chain is Ribosomal protein L11 methyltransferase (280 aa).

Positions 131, 152, 174, and 217 each coordinate S-adenosyl-L-methionine.

It belongs to the methyltransferase superfamily. PrmA family.

Its subcellular location is the cytoplasm. It carries out the reaction L-lysyl-[protein] + 3 S-adenosyl-L-methionine = N(6),N(6),N(6)-trimethyl-L-lysyl-[protein] + 3 S-adenosyl-L-homocysteine + 3 H(+). Its function is as follows. Methylates ribosomal protein L11. The sequence is that of Ribosomal protein L11 methyltransferase from Bacteroides fragilis (strain ATCC 25285 / DSM 2151 / CCUG 4856 / JCM 11019 / LMG 10263 / NCTC 9343 / Onslow / VPI 2553 / EN-2).